A 392-amino-acid polypeptide reads, in one-letter code: ATP-dependent RNA helicase eIF4A (392 aa).

Positions 19–47 match the Q motif motif; it reads DTFDDMNLKPELLRGIYAYGFERPSAIQQ. The Helicase ATP-binding domain occupies 50-220; that stretch reads IMPILGERDV…TKFMRDPIRI (171 aa). Position 63–70 (63–70) interacts with ATP; it reads AQSGTGKT. Serine 65 carries the phosphoserine modification. Positions 168–171 match the DEAD box motif; sequence DEAD. One can recognise a Helicase C-terminal domain in the interval 231–392; that stretch reads GIKQFYVAVE…EMPMNIADLI (162 aa).

Belongs to the DEAD box helicase family. eIF4A subfamily. Component of the eIF4F complex, which composition varies with external and internal environmental conditions. It is composed of at least eIF4A, eIF4E and eIF4G.

The protein resides in the cytoplasm. The catalysed reaction is ATP + H2O = ADP + phosphate + H(+). Its function is as follows. ATP-dependent RNA helicase which is a subunit of the eIF4F complex involved in cap recognition and is required for mRNA binding to ribosome. In the current model of translation initiation, eIF4A unwinds RNA secondary structures in the 5'-UTR of mRNAs which is necessary to allow efficient binding of the small ribosomal subunit, and subsequent scanning for the initiator codon. The chain is ATP-dependent RNA helicase eIF4A (tif1) from Schizosaccharomyces pombe (strain 972 / ATCC 24843) (Fission yeast).